The following is a 311-amino-acid chain: p-hydroxybenzoic acid efflux pump subunit AaeA (311 aa).

The chain crosses the membrane as a helical span at residues 11-31 (IAITLILVLLGIIAIFKAWVF).

The protein belongs to the membrane fusion protein (MFP) (TC 8.A.1) family.

It is found in the cell inner membrane. Its function is as follows. Forms an efflux pump with AaeB. The sequence is that of p-hydroxybenzoic acid efflux pump subunit AaeA from Serratia proteamaculans (strain 568).